The following is a 156-amino-acid chain: Small ribosomal subunit protein uS7 (156 aa).

Belongs to the universal ribosomal protein uS7 family. As to quaternary structure, part of the 30S ribosomal subunit. Contacts proteins S9 and S11.

Functionally, one of the primary rRNA binding proteins, it binds directly to 16S rRNA where it nucleates assembly of the head domain of the 30S subunit. Is located at the subunit interface close to the decoding center, probably blocks exit of the E-site tRNA. This chain is Small ribosomal subunit protein uS7, found in Actinobacillus pleuropneumoniae serotype 5b (strain L20).